A 283-amino-acid polypeptide reads, in one-letter code: Energy-coupling factor transporter ATP-binding protein EcfA1 (283 aa).

The 238-residue stretch at 7 to 244 (VEFRHVSFTY…PELLQEIGLD (238 aa)) folds into the ABC transporter domain. An ATP-binding site is contributed by 41–48 (GHNGSGKS).

It belongs to the ABC transporter superfamily. Energy-coupling factor EcfA family. Forms a stable energy-coupling factor (ECF) transporter complex composed of 2 membrane-embedded substrate-binding proteins (S component), 2 ATP-binding proteins (A component) and 2 transmembrane proteins (T component).

It is found in the cell membrane. Its function is as follows. ATP-binding (A) component of a common energy-coupling factor (ECF) ABC-transporter complex. Unlike classic ABC transporters this ECF transporter provides the energy necessary to transport a number of different substrates. In Lactobacillus acidophilus (strain ATCC 700396 / NCK56 / N2 / NCFM), this protein is Energy-coupling factor transporter ATP-binding protein EcfA1.